Here is a 335-residue protein sequence, read N- to C-terminus: Phosphate acyltransferase (335 aa).

Belongs to the PlsX family. As to quaternary structure, homodimer. Probably interacts with PlsY.

The protein localises to the cytoplasm. The catalysed reaction is a fatty acyl-[ACP] + phosphate = an acyl phosphate + holo-[ACP]. It functions in the pathway lipid metabolism; phospholipid metabolism. Catalyzes the reversible formation of acyl-phosphate (acyl-PO(4)) from acyl-[acyl-carrier-protein] (acyl-ACP). This enzyme utilizes acyl-ACP as fatty acyl donor, but not acyl-CoA. The protein is Phosphate acyltransferase of Leptospira interrogans serogroup Icterohaemorrhagiae serovar copenhageni (strain Fiocruz L1-130).